Here is a 128-residue protein sequence, read N- to C-terminus: Gastrotropin (128 aa).

N-acetylalanine is present on A2.

The protein belongs to the calycin superfamily. Fatty-acid binding protein (FABP) family.

It localises to the cytoplasm. The protein resides in the membrane. In terms of biological role, binds to bile acids and is involved in enterohepatic bile acid metabolism. Required for efficient apical to basolateral transport of conjugated bile acids in ileal enterocytes. Stimulates gastric acid and pepsinogen secretion. The protein is Gastrotropin (FABP6) of Bos taurus (Bovine).